A 644-amino-acid chain; its full sequence is Chaperone protein DnaK (644 aa).

Position 199 is a phosphothreonine; by autocatalysis (threonine 199). The segment at 602-644 (IYAKKSSEGQTAQGQTQSQESTKPAEEGVVDAEFEEVKEEDKK) is disordered. A compositionally biased stretch (polar residues) spans 609–623 (EGQTAQGQTQSQEST). The segment covering 629-644 (GVVDAEFEEVKEEDKK) has biased composition (acidic residues).

The protein belongs to the heat shock protein 70 family.

In terms of biological role, acts as a chaperone. This Legionella pneumophila (strain Lens) protein is Chaperone protein DnaK.